Reading from the N-terminus, the 155-residue chain is MTAGTVVITGGILATVILLCIIAVLCYCRLQYYCCKKEDSEEDEEEPDFAVHSRFPPMHSNRNIVLANGPSIYSSPYNKKHQHCRSVCTHHEPPAFLLHPPEEIRNGGERIAYKTISQEEIELPVNVSNLQVLNPNRLSAMREAFSRSRSISTDV.

The chain crosses the membrane as a helical span at residues 6 to 26 (VVITGGILATVILLCIIAVLC).

Belongs to the FAM163 family.

It localises to the membrane. The polypeptide is Protein FAM163B (fam163b) (Xenopus tropicalis (Western clawed frog)).